The following is a 391-amino-acid chain: Formate-dependent phosphoribosylglycinamide formyltransferase (391 aa).

N(1)-(5-phospho-beta-D-ribosyl)glycinamide is bound by residues 20–21 (EL) and glutamate 80. ATP contacts are provided by residues arginine 112, lysine 153, 158–163 (SSGKGQ), 193–196 (EGFI), and glutamate 201. One can recognise an ATP-grasp domain in the interval 117-306 (RLAAEELGLT…EFALHVRAFT (190 aa)). Mg(2+) contacts are provided by glutamate 265 and glutamate 277. Residues aspartate 284, lysine 354, and 361 to 362 (RR) each bind N(1)-(5-phospho-beta-D-ribosyl)glycinamide.

This sequence belongs to the PurK/PurT family. As to quaternary structure, homodimer.

The catalysed reaction is N(1)-(5-phospho-beta-D-ribosyl)glycinamide + formate + ATP = N(2)-formyl-N(1)-(5-phospho-beta-D-ribosyl)glycinamide + ADP + phosphate + H(+). Its pathway is purine metabolism; IMP biosynthesis via de novo pathway; N(2)-formyl-N(1)-(5-phospho-D-ribosyl)glycinamide from N(1)-(5-phospho-D-ribosyl)glycinamide (formate route): step 1/1. Functionally, involved in the de novo purine biosynthesis. Catalyzes the transfer of formate to 5-phospho-ribosyl-glycinamide (GAR), producing 5-phospho-ribosyl-N-formylglycinamide (FGAR). Formate is provided by PurU via hydrolysis of 10-formyl-tetrahydrofolate. The chain is Formate-dependent phosphoribosylglycinamide formyltransferase from Vibrio vulnificus (strain CMCP6).